The sequence spans 123 residues: MHYCNKDIGSFGETIAADYIKNSGYIILERNFRCKLGEIDIIAKDKNFIVFIEVKTRYGYIYGSPSEAITFRKQNKIYKTAQLYIMKKAIHNKFYFRFDVIEVILNTLNSNYSVKLIKNAFQI.

It belongs to the UPF0102 family.

The chain is UPF0102 protein CLK_1817 from Clostridium botulinum (strain Loch Maree / Type A3).